Consider the following 311-residue polypeptide: Aspartate carbamoyltransferase catalytic subunit (311 aa).

R59 and T60 together coordinate carbamoyl phosphate. K87 is a binding site for L-aspartate. Carbamoyl phosphate is bound by residues R109, H139, and Q142. 2 residues coordinate L-aspartate: R172 and R224. A265 and P266 together coordinate carbamoyl phosphate.

The protein belongs to the aspartate/ornithine carbamoyltransferase superfamily. ATCase family. Heterododecamer (2C3:3R2) of six catalytic PyrB chains organized as two trimers (C3), and six regulatory PyrI chains organized as three dimers (R2).

It catalyses the reaction carbamoyl phosphate + L-aspartate = N-carbamoyl-L-aspartate + phosphate + H(+). It functions in the pathway pyrimidine metabolism; UMP biosynthesis via de novo pathway; (S)-dihydroorotate from bicarbonate: step 2/3. Functionally, catalyzes the condensation of carbamoyl phosphate and aspartate to form carbamoyl aspartate and inorganic phosphate, the committed step in the de novo pyrimidine nucleotide biosynthesis pathway. The sequence is that of Aspartate carbamoyltransferase catalytic subunit from Streptococcus pyogenes serotype M1.